Consider the following 334-residue polypeptide: Glycerol-1-phosphate dehydrogenase [NAD(P)+] (334 aa).

NAD(+) contacts are provided by residues 77-81 (GKPID) and 99-102 (TTAS). Asp-104 is a binding site for substrate. NAD(+) is bound at residue Ser-108. Asp-147 serves as a coordination point for substrate. Positions 147 and 225 each coordinate Zn(2+). Position 229 (His-229) interacts with substrate. Residue His-246 coordinates Zn(2+).

Belongs to the glycerol-1-phosphate dehydrogenase family. It depends on Zn(2+) as a cofactor.

The protein resides in the cytoplasm. It carries out the reaction sn-glycerol 1-phosphate + NAD(+) = dihydroxyacetone phosphate + NADH + H(+). The catalysed reaction is sn-glycerol 1-phosphate + NADP(+) = dihydroxyacetone phosphate + NADPH + H(+). It functions in the pathway membrane lipid metabolism; glycerophospholipid metabolism. In terms of biological role, catalyzes the NAD(P)H-dependent reduction of dihydroxyacetonephosphate (DHAP or glycerone phosphate) to glycerol 1-phosphate (G1P). The G1P thus generated is used as the glycerophosphate backbone of phospholipids in the cellular membranes of Archaea. In Methanococcus vannielii (strain ATCC 35089 / DSM 1224 / JCM 13029 / OCM 148 / SB), this protein is Glycerol-1-phosphate dehydrogenase [NAD(P)+].